The primary structure comprises 219 residues: PKHD-type hydroxylase Mmar10_1675 (219 aa).

Residues 77–171 (TLSRILVSRY…RVAVVGWVRS (95 aa)) form the Fe2OG dioxygenase domain. Residues His95, Asp97, and His152 each coordinate Fe cation. Arg162 is a 2-oxoglutarate binding site.

Fe(2+) is required as a cofactor. Requires L-ascorbate as cofactor.

This chain is PKHD-type hydroxylase Mmar10_1675, found in Maricaulis maris (strain MCS10) (Caulobacter maris).